The following is a 476-amino-acid chain: uncharacterized protein (476 aa).

Belongs to the herpesviridae US22 family.

This is an uncharacterized protein from Homo sapiens (Human).